We begin with the raw amino-acid sequence, 297 residues long: uncharacterized protein (297 aa).

The next 6 membrane-spanning stretches (helical) occupy residues 26–48 (FVLHGLSVIAVSIATLLSAIYAI), 80–102 (NIELLGVTFVFGLVIVAALAALF), 134–156 (LFKFELILTLLIGIAFIPLINLG), 185–205 (LGIFAITIQFLFTFVPYAIVI), 225–247 (LVDTIIMWLLVGLAGMALQVAAY), and 262–284 (LVAVILGWVAVMPITTCWWVELY).

The protein localises to the cell membrane. This is an uncharacterized protein from Archaeoglobus fulgidus (strain ATCC 49558 / DSM 4304 / JCM 9628 / NBRC 100126 / VC-16).